Reading from the N-terminus, the 250-residue chain is Probable syntaxin-8B (250 aa).

The Cytoplasmic portion of the chain corresponds to Met1–Asn213. Residues Glu73–Ala100 adopt a coiled-coil conformation. One can recognise a t-SNARE coiled-coil homology domain in the interval Gln148–Ile210. A helical; Anchor for type IV membrane protein transmembrane segment spans residues Ala214–Ile234. The Vesicular segment spans residues Ala235–Pro250.

Belongs to the syntaxin family.

It localises to the membrane. The sequence is that of Probable syntaxin-8B (syn8B) from Dictyostelium discoideum (Social amoeba).